Consider the following 27-residue polypeptide: Bombinin-like peptide 2 (27 aa).

Asparagine amide is present on N27.

This sequence belongs to the bombinin family. As to expression, expressed by the skin glands.

It is found in the secreted. Its function is as follows. Has antimicrobial activity, but no hemolytic activity. Preference on killing Gram-negative non-enteric bacteria. The chain is Bombinin-like peptide 2 from Bombina orientalis (Oriental fire-bellied toad).